Here is a 464-residue protein sequence, read N- to C-terminus: MSQSYSSSQRVSSYRRTFGGGTSPVFPRASFGSRGSGSSVTSRVYQVSRTSAVPTLSTFRTTRVTPLRTYQSAYQGAGELLDFSLADAMNQEFLQTRTNEKVELQELNDRFANYIEKVRFLEQQNALMVAEVNRLRGKEPTRVAEMYEEELRELRRQVDALTGQRARVEVERDNLLDDLQKLKQRLQEEIQLKEEAENNLAAFRADVDAATLARIDLERRIESLQEEIAFLKKVHEEEIRELQAQLQEQHIQVEMDISKPDLTAALRDIRAQYESIAAKNIAEAEEWYKSKVSDLTQAANKNNDALRQAKQEMLEYRHQIQSYTCEIDALKGTNDSLMRQMREMEERFAGEAGGYQDTIARLEEEIRHLKDEMARHLREYQDLLNVKMALDVEIATYRKLLEGEENRISIPMHQTFASALNFRETSPDQRGSEVHTKKTVMIKTIETRDGEVVSEATQQQHEVL.

Position 2 is a blocked amino end (Ser) (S2). The head stretch occupies residues 2–100 (SQSYSSSQRV…QEFLQTRTNE (99 aa)). 2 positions are modified to phosphoserine; by CDK1: S7 and S23. T65 is modified (phosphothreonine; by CDK1). The region spanning 100–408 (EKVELQELND…KLLEGEENRI (309 aa)) is the IF rod domain. A coil 1A region spans residues 101–133 (KVELQELNDRFANYIEKVRFLEQQNALMVAEVN). The interval 134 to 143 (RLRGKEPTRV) is linker 1. Residues 144 to 244 (AEMYEEELRE…HEEEIRELQA (101 aa)) are coil 1B. Positions 245 to 260 (QLQEQHIQVEMDISKP) are linker 12. Residues 261 to 279 (DLTAALRDIRAQYESIAAK) are coil 2A. Residues 280 to 287 (NIAEAEEW) form a linker 2 region. Positions 288-404 (YKSKVSDLTQ…ATYRKLLEGE (117 aa)) are coil 2B. Residues 405–464 (ENRISIPMHQTFASALNFRETSPDQRGSEVHTKKTVMIKTIETRDGEVVSEATQQQHEVL) are tail.

This sequence belongs to the intermediate filament family. As to quaternary structure, homomer.

It is found in the cytoplasm. It localises to the myofibril. The protein localises to the sarcomere. Its subcellular location is the z line. The protein resides in the cell membrane. It is found in the sarcolemma. Muscle-specific type III intermediate filament essential for proper muscular structure and function. Plays a crucial role in maintaining the structure of sarcomeres, inter-connecting the Z-disks and forming the myofibrils, linking them not only to the sarcolemmal cytoskeleton, but also to the nucleus and mitochondria, thus providing strength for the muscle fiber during activity. In adult striated muscle they form a fibrous network connecting myofibrils to each other and to the plasma membrane from the periphery of the Z-line structures. The chain is Desmin (DES) from Gallus gallus (Chicken).